The sequence spans 219 residues: Thiamine-phosphate synthase (219 aa).

4-amino-2-methyl-5-(diphosphooxymethyl)pyrimidine is bound by residues 44 to 48 (QFREK) and asparagine 79. Mg(2+) is bound by residues aspartate 80 and aspartate 99. Residue serine 117 participates in 4-amino-2-methyl-5-(diphosphooxymethyl)pyrimidine binding. Residue 143–145 (TST) participates in 2-[(2R,5Z)-2-carboxy-4-methylthiazol-5(2H)-ylidene]ethyl phosphate binding. Residue lysine 146 coordinates 4-amino-2-methyl-5-(diphosphooxymethyl)pyrimidine. 2-[(2R,5Z)-2-carboxy-4-methylthiazol-5(2H)-ylidene]ethyl phosphate is bound by residues glycine 175 and 195-196 (IS).

It belongs to the thiamine-phosphate synthase family. It depends on Mg(2+) as a cofactor.

It carries out the reaction 2-[(2R,5Z)-2-carboxy-4-methylthiazol-5(2H)-ylidene]ethyl phosphate + 4-amino-2-methyl-5-(diphosphooxymethyl)pyrimidine + 2 H(+) = thiamine phosphate + CO2 + diphosphate. The enzyme catalyses 2-(2-carboxy-4-methylthiazol-5-yl)ethyl phosphate + 4-amino-2-methyl-5-(diphosphooxymethyl)pyrimidine + 2 H(+) = thiamine phosphate + CO2 + diphosphate. It catalyses the reaction 4-methyl-5-(2-phosphooxyethyl)-thiazole + 4-amino-2-methyl-5-(diphosphooxymethyl)pyrimidine + H(+) = thiamine phosphate + diphosphate. Its pathway is cofactor biosynthesis; thiamine diphosphate biosynthesis; thiamine phosphate from 4-amino-2-methyl-5-diphosphomethylpyrimidine and 4-methyl-5-(2-phosphoethyl)-thiazole: step 1/1. Functionally, condenses 4-methyl-5-(beta-hydroxyethyl)thiazole monophosphate (THZ-P) and 2-methyl-4-amino-5-hydroxymethyl pyrimidine pyrophosphate (HMP-PP) to form thiamine monophosphate (TMP). The protein is Thiamine-phosphate synthase of Bacillus cereus (strain ATCC 14579 / DSM 31 / CCUG 7414 / JCM 2152 / NBRC 15305 / NCIMB 9373 / NCTC 2599 / NRRL B-3711).